A 293-amino-acid chain; its full sequence is Taste receptor type 2 member 143 (293 aa).

The Extracellular portion of the chain corresponds to 1-6 (MPSTPT). Residues 7–27 (LIFIIIFYLVSLASMLQNGFM) form a helical membrane-spanning segment. The Cytoplasmic segment spans residues 28–55 (MIVLGREWMRNRTLPAADMIVASLASSR). The chain crosses the membrane as a helical span at residues 56–76 (FCLHGIAILANLLASFDFCYQ). The Extracellular portion of the chain corresponds to 77–79 (ANL). Residues 80–100 (IGILWDFTNTLIFWLTAWLAI) traverse the membrane as a helical segment. The Cytoplasmic segment spans residues 101–127 (FYCVKISSFSHPVLFWLKWRISQLVPR). The chain crosses the membrane as a helical span at residues 128–148 (LLVVSLIIGGLSAVISATGNF). Residues 149 to 181 (MANQMTISQGFHGNCTFGHMSLDFYRYYYLYHS) lie on the Extracellular side of the membrane. Asn-162 carries N-linked (GlcNAc...) asparagine glycosylation. A helical transmembrane segment spans residues 182–202 (VLMWFTPFFLFLVSVIVLMFS). The Cytoplasmic portion of the chain corresponds to 203-227 (LYQHVEKMRGHRPGPWDLHTQAHTM). The helical transmembrane segment at 228–248 (ALKSLTFFFIFYIFFFLALVI) threads the bilayer. Residues 249 to 264 (SSTKRKSMQSYYWARE) are Extracellular-facing. Residues 265-285 (AIIYTGIFLNSIILLFSNPKL) traverse the membrane as a helical segment. Residues 286 to 293 (RKALKMRF) lie on the Cytoplasmic side of the membrane.

This sequence belongs to the G-protein coupled receptor T2R family.

The protein localises to the membrane. Putative taste receptor which may play a role in the perception of bitterness. In Mus musculus (Mouse), this protein is Taste receptor type 2 member 143 (Tas2r143).